The primary structure comprises 197 residues: Fucoxanthin-chlorophyll a-c binding protein F, chloroplastic (197 aa).

Residues 1–31 constitute a chloroplast transit peptide; sequence MKFAVFASLLASAAAFAPAQQSARTSVATNM. The next 3 membrane-spanning stretches (helical) occupy residues 73-94, 114-134, and 174-196; these read ISMLAVVGYLVQENGIRLPGDI, ISTAGIAQIVAFIGFLEIAVM, and GRAAQMGILALMVHEKLGVSLIP.

It belongs to the fucoxanthin chlorophyll protein family. The LHC complex of chromophytic algae is composed of fucoxanthin, chlorophyll A and C bound non-covalently by fucoxanthin chlorophyll proteins (FCPs). The ratio of the pigments in lhc; fucoxanthin: chlorophyll C: chlorophyll A is (0.6-1): (0.1-0.3): (1).

The protein resides in the plastid. It is found in the chloroplast thylakoid membrane. The light-harvesting complex (LHC) functions as a light receptor, it captures and delivers excitation energy to photosystems with which it is closely associated. In chromophytic algae, LHC is associated with photosystem II, energy being transferred from fucoxanthin and chlorophyll C to chlorophyll A and the photosynthetic reaction centers where it is used to synthesize ATP and reducing power. In Phaeodactylum tricornutum (Diatom), this protein is Fucoxanthin-chlorophyll a-c binding protein F, chloroplastic (FCPF).